A 575-amino-acid chain; its full sequence is Major outer membrane protein MspA (575 aa).

Positions 1–19 (MKKALVFFVALAMIGSVFA) are cleaved as a signal peptide.

Its subcellular location is the cell outer membrane. Major component of the outer membrane sheath. The sequence is that of Major outer membrane protein MspA (mspA) from Treponema maltophilum.